The sequence spans 188 residues: GMP synthase [glutamine-hydrolyzing] subunit A (188 aa).

The Glutamine amidotransferase type-1 domain occupies 2 to 188; that stretch reads KIYIIDNGGQ…FKNFIEKCRR (187 aa). Catalysis depends on cysteine 79, which acts as the Nucleophile. Active-site residues include histidine 166 and glutamate 168.

In terms of assembly, heterodimer composed of a glutamine amidotransferase subunit (A) and a GMP-binding subunit (B).

The catalysed reaction is XMP + L-glutamine + ATP + H2O = GMP + L-glutamate + AMP + diphosphate + 2 H(+). The protein operates within purine metabolism; GMP biosynthesis; GMP from XMP (L-Gln route): step 1/1. In terms of biological role, catalyzes the synthesis of GMP from XMP. This is GMP synthase [glutamine-hydrolyzing] subunit A from Picrophilus torridus (strain ATCC 700027 / DSM 9790 / JCM 10055 / NBRC 100828 / KAW 2/3).